Here is a 269-residue protein sequence, read N- to C-terminus: Microtubule-associated protein RP/EB family member 1 (269 aa).

Residues Asn14 to Asp116 enclose the Calponin-homology (CH) domain. Positions Arg168–Gly190 are disordered. One can recognise an EB1 C-terminal domain in the interval Thr186 to Ile256.

It belongs to the MAPRE family.

The protein localises to the cytoplasm. The protein resides in the cytoskeleton. Its subcellular location is the microtubule organizing center. It is found in the centrosome. It localises to the golgi apparatus. The protein localises to the spindle. The protein resides in the spindle pole. Functionally, plus-end tracking protein (+TIP) that binds to the plus-end of microtubules and regulates the dynamics of the microtubule cytoskeleton. Promotes cytoplasmic microtubule nucleation and elongation. Involved in mitotic spindle positioning by stabilizing microtubules and promoting dynamic connection between astral microtubules and the cortex during mitotic chromosome segregation. This is Microtubule-associated protein RP/EB family member 1 (mapre1) from Xenopus tropicalis (Western clawed frog).